The primary structure comprises 285 residues: Integrin alpha-1 (285 aa).

Over 1–285 (ENMTFGTTLV…HYSQDWVMLG (285 aa)) the chain is Extracellular. 4 N-linked (GlcNAc...) asparagine glycosylation sites follow: Asn-2, Asn-40, Asn-208, and Asn-232. The VWFA domain maps to 66–279 (IVLDGSNSIY…QAGFSAHYSQ (214 aa)).

The protein belongs to the integrin alpha chain family. In terms of assembly, heterodimer of an alpha and a beta subunit. Alpha-1 associates with beta-1.

The protein resides in the membrane. Functionally, integrin alpha-1/beta-1 is a receptor for laminin and collagen. It recognizes the proline-hydroxylated sequence G-F-P-G-E-R in collagen. Involved in anchorage-dependent, negative regulation of EGF-stimulated cell growth. In Gallus gallus (Chicken), this protein is Integrin alpha-1 (ITGA1).